The following is a 328-amino-acid chain: Phenylalanine--tRNA ligase alpha subunit (328 aa).

Glu-245 is a binding site for Mg(2+).

Belongs to the class-II aminoacyl-tRNA synthetase family. Phe-tRNA synthetase alpha subunit type 1 subfamily. In terms of assembly, tetramer of two alpha and two beta subunits. Mg(2+) is required as a cofactor.

The protein localises to the cytoplasm. It catalyses the reaction tRNA(Phe) + L-phenylalanine + ATP = L-phenylalanyl-tRNA(Phe) + AMP + diphosphate + H(+). The sequence is that of Phenylalanine--tRNA ligase alpha subunit from Helicobacter pylori (strain Shi470).